The chain runs to 774 residues: Potassium/sodium hyperpolarization-activated cyclic nucleotide-gated channel 3 (774 aa).

The interval 1 to 48 is disordered; that stretch reads MEAEQRPAAGASEGATPGLEAVPPVAPPPATAASGPIPKSGPEPKRRH. Over 1–97 the chain is Cytoplasmic; that stretch reads MEAEQRPAAG…PYSDFRFYWD (97 aa). The involved in subunit assembly stretch occupies residues 46–91; the sequence is RRHLGTLLQPTVNKFSLRVFGSHKAVEIEQERVKSAGAWIIHPYSD. A helical membrane pass occupies residues 98–118; the sequence is LIMLLLMVGNLIVLPVGITFF. At 119–124 the chain is on the extracellular side; sequence KEENSP. The chain crosses the membrane as a helical span at residues 125 to 145; it reads PWIVFNVLSDTFFLLDLVLNF. Topologically, residues 146-171 are cytoplasmic; sequence RTGIVVEEGAEILLAPRAIRTRYLRT. The helical transmembrane segment at 172–192 threads the bilayer; sequence WFLVDLISSIPVDYIFLVVEL. At 193–201 the chain is on the extracellular side; sequence EPRLDAEVY. Residues 202-222 traverse the membrane as a helical; Voltage-sensor segment; the sequence is KTARALRIVRFTKILSLLRLL. Topologically, residues 223–253 are cytoplasmic; the sequence is RLSRLIRYIHQWEEIFHMTYDLASAVVRIFN. A helical transmembrane segment spans residues 254-274; that stretch reads LIGMMLLLCHWDGCLQFLVPM. At 275–297 the chain is on the extracellular side; it reads LQDFPPDCWVSINHMVNHSWGRQ. Asn291 carries N-linked (GlcNAc...) asparagine glycosylation. The pore-forming intramembrane region spans 298–319; that stretch reads YSHALFKAMSHMLCIGYGQQAP. At 320-329 the chain is on the extracellular side; it reads VGMPDVWLTM. Residues 330–350 traverse the membrane as a helical segment; sequence LSMIVGATCYAMFIGHATALI. Residues 351-774 are Cytoplasmic-facing; it reads QSLDSSRRQY…PRGLQLSANM (424 aa). The tract at residues 354 to 774 is interaction with KCTD3; that stretch reads DSSRRQYQEK…PRGLQLSANM (421 aa). The 3',5'-cyclic AMP site is built by Gly492, Glu493, Cys495, Arg502, Thr503, Arg543, and Arg546. Ser634 is modified (phosphoserine). The segment at 682–774 is disordered; sequence SLSRAGRSQV…PRGLQLSANM (93 aa). A compositionally biased stretch (pro residues) spans 751–763; sequence TAQPPRPPVPEPA.

It belongs to the potassium channel HCN family. In terms of assembly, homotetramer. The potassium channel is composed of a homo- or heterotetrameric complex of pore-forming subunits. Interacts with HCN11. Interacts with KCTD3; this interaction increases cell surface expression and current density of this channel. Interacts with PEX5L. Detected in brain.

The protein localises to the cell membrane. It catalyses the reaction K(+)(in) = K(+)(out). It carries out the reaction Na(+)(in) = Na(+)(out). With respect to regulation, unlike HCN2 and HCN4, HCN3 is insensitive to cyclic nucleotides, such as cAMP or cGMP. This lack of sensitivity of HCN3, despite harboring a functional cyclic nucleotide-binding domain (CNBD), may be explained by its shorter C-terminal sequence, which may alter the normal autoinhibition of the channel. Inhibited by Cs(1+) and ZD7288. Phosphatidylinositol-4,5-bisphosphate (PIP(2)) shifts HCN3 activation to more depolarized potentials and accelerated activation kinetics. Functionally, hyperpolarization-activated ion channel that are permeable to sodium and potassium ions, with an about 3:1 preference for potassium ions. Contributes to the native pacemaker currents in heart (If) and in neurons (Ih). In particular, plays a pivotal role in maintaining excitability and promoting rhythmic burst firing within hypothalamic nuclei. Exerts a significant influence on the configuration of the cardiac action potential waveform. Does not appear to play a prominent role in the processing of acute, neuropathic, or inflammatory pain. The chain is Potassium/sodium hyperpolarization-activated cyclic nucleotide-gated channel 3 (HCN3) from Homo sapiens (Human).